The chain runs to 263 residues: Ribosome maturation factor RimP (263 aa).

The interval 192 to 263 (EREMKRDLGI…RGEIDPIEGE (72 aa)) is disordered. Residues 217-231 (PARRNAPKPKLKSTA) are compositionally biased toward basic residues. Residues 232–257 (KAHEKKPPKNTKEHRLAAERLRRGEI) show a composition bias toward basic and acidic residues.

The protein belongs to the RimP family.

Its subcellular location is the cytoplasm. Required for maturation of 30S ribosomal subunits. This is Ribosome maturation factor RimP from Nitrobacter hamburgensis (strain DSM 10229 / NCIMB 13809 / X14).